Consider the following 198-residue polypeptide: Inosine triphosphate pyrophosphatase (198 aa).

A2 carries the post-translational modification N-acetylalanine. 14–19 (TGNAKK) contributes to the ITP binding site. E44 serves as a coordination point for Mg(2+). ITP is bound by residues K56, 72-73 (DT), and K89. Phosphoserine is present on S146. ITP-binding positions include 149 to 152 (FGWD), K172, and 177 to 178 (HR).

The protein belongs to the HAM1 NTPase family. Homodimer. Requires Mg(2+) as cofactor. The cofactor is Mn(2+).

It localises to the cytoplasm. The catalysed reaction is ITP + H2O = IMP + diphosphate + H(+). The enzyme catalyses dITP + H2O = dIMP + diphosphate + H(+). It catalyses the reaction XTP + H2O = XMP + diphosphate + H(+). It carries out the reaction N(6)-hydroxy-dATP + H2O = N(6)-hydroxy-dAMP + diphosphate + H(+). Pyrophosphatase that hydrolyzes the non-canonical purine nucleotides inosine triphosphate (ITP), deoxyinosine triphosphate (dITP) as well as 2'-deoxy-N-6-hydroxylaminopurine triphosphate (dHAPTP) and xanthosine 5'-triphosphate (XTP) to their respective monophosphate derivatives. The enzyme does not distinguish between the deoxy- and ribose forms. Probably excludes non-canonical purines from RNA and DNA precursor pools, thus preventing their incorporation into RNA and DNA and avoiding chromosomal lesions. In Rattus norvegicus (Rat), this protein is Inosine triphosphate pyrophosphatase (Itpa).